Reading from the N-terminus, the 366-residue chain is Histidinol-phosphate aminotransferase (366 aa).

Position 227 is an N6-(pyridoxal phosphate)lysine (Lys227).

Belongs to the class-II pyridoxal-phosphate-dependent aminotransferase family. Histidinol-phosphate aminotransferase subfamily. Homodimer. Pyridoxal 5'-phosphate is required as a cofactor.

It catalyses the reaction L-histidinol phosphate + 2-oxoglutarate = 3-(imidazol-4-yl)-2-oxopropyl phosphate + L-glutamate. It participates in amino-acid biosynthesis; L-histidine biosynthesis; L-histidine from 5-phospho-alpha-D-ribose 1-diphosphate: step 7/9. This chain is Histidinol-phosphate aminotransferase, found in Campylobacter hominis (strain ATCC BAA-381 / DSM 21671 / CCUG 45161 / LMG 19568 / NCTC 13146 / CH001A).